A 485-amino-acid chain; its full sequence is Glutamyl-tRNA(Gln) amidotransferase subunit A (485 aa).

Catalysis depends on charge relay system residues lysine 79 and serine 154. Catalysis depends on serine 178, which acts as the Acyl-ester intermediate.

It belongs to the amidase family. GatA subfamily. In terms of assembly, heterotrimer of A, B and C subunits.

The enzyme catalyses L-glutamyl-tRNA(Gln) + L-glutamine + ATP + H2O = L-glutaminyl-tRNA(Gln) + L-glutamate + ADP + phosphate + H(+). In terms of biological role, allows the formation of correctly charged Gln-tRNA(Gln) through the transamidation of misacylated Glu-tRNA(Gln) in organisms which lack glutaminyl-tRNA synthetase. The reaction takes place in the presence of glutamine and ATP through an activated gamma-phospho-Glu-tRNA(Gln). This is Glutamyl-tRNA(Gln) amidotransferase subunit A from Staphylococcus epidermidis (strain ATCC 12228 / FDA PCI 1200).